The chain runs to 545 residues: Chaperonin GroEL (545 aa).

ATP contacts are provided by residues threonine 29–proline 32, lysine 50, aspartate 86–threonine 90, glycine 414, aspartate 477–alanine 479, and aspartate 493.

It belongs to the chaperonin (HSP60) family. As to quaternary structure, forms a cylinder of 14 subunits composed of two heptameric rings stacked back-to-back. Interacts with the co-chaperonin GroES.

The protein resides in the cytoplasm. The enzyme catalyses ATP + H2O + a folded polypeptide = ADP + phosphate + an unfolded polypeptide.. Functionally, together with its co-chaperonin GroES, plays an essential role in assisting protein folding. The GroEL-GroES system forms a nano-cage that allows encapsulation of the non-native substrate proteins and provides a physical environment optimized to promote and accelerate protein folding. This chain is Chaperonin GroEL, found in Campylobacter jejuni subsp. jejuni serotype O:6 (strain 81116 / NCTC 11828).